The following is a 194-amino-acid chain: Ribosome maturation factor RimM (194 aa).

The PRC barrel domain maps to 92 to 190 (DDGYYDHELI…ALVVTPPEGL (99 aa)).

The protein belongs to the RimM family. Binds ribosomal protein uS19.

The protein localises to the cytoplasm. An accessory protein needed during the final step in the assembly of 30S ribosomal subunit, possibly for assembly of the head region. Essential for efficient processing of 16S rRNA. May be needed both before and after RbfA during the maturation of 16S rRNA. It has affinity for free ribosomal 30S subunits but not for 70S ribosomes. The chain is Ribosome maturation factor RimM from Corynebacterium urealyticum (strain ATCC 43042 / DSM 7109).